The primary structure comprises 371 residues: Cytoplasmic dynein intermediate light chain DYN3 (371 aa).

It belongs to the dynein light intermediate chain DYN3 family. The cytoplasmic dynein is composed of at least two heavy chains and a number of intermediate and light chains.

The protein localises to the cytoplasm. It is found in the cytoskeleton. Functionally, component of the cytoplasmic dynein which acts as a motor for the intracellular retrograde motility of vesicles and organelles along microtubules. May play an important role in the proper orientation of the mitotic spindle into the budding daughter cell yeast. Probably required for normal progression of the cell cycle. The chain is Cytoplasmic dynein intermediate light chain DYN3 (DYN3) from Eremothecium gossypii (strain ATCC 10895 / CBS 109.51 / FGSC 9923 / NRRL Y-1056) (Yeast).